The sequence spans 117 residues: DNA-binding protein VNG_2008H (117 aa).

Residues methionine 1 to arginine 59 are disordered. Residues glutamate 11–leucine 21 are compositionally biased toward basic and acidic residues. The span at glutamine 35–alanine 48 shows a compositional bias: low complexity.

The protein belongs to the PDCD5 family.

This Halobacterium salinarum (strain ATCC 700922 / JCM 11081 / NRC-1) (Halobacterium halobium) protein is DNA-binding protein VNG_2008H.